The following is a 688-amino-acid chain: Hid-1 family protein P19A11.07c (688 aa).

It belongs to the hid-1 family.

Its subcellular location is the cytoplasm. It localises to the nucleus. This is Hid-1 family protein P19A11.07c from Schizosaccharomyces pombe (strain 972 / ATCC 24843) (Fission yeast).